The chain runs to 212 residues: Pyridoxine/pyridoxamine 5'-phosphate oxidase (212 aa).

Residues 9–12 and lysine 67 contribute to the substrate site; that span reads RKSY. FMN-binding positions include 62-67, 77-78, arginine 83, and lysine 84; these read RIVLIK and FT. Substrate is bound by residues tyrosine 124, arginine 128, and serine 132. FMN contacts are provided by residues 141–142 and tryptophan 185; that span reads QS. Residue 191-193 participates in substrate binding; it reads RLH. FMN is bound at residue arginine 195.

This sequence belongs to the pyridoxamine 5'-phosphate oxidase family. Homodimer. FMN serves as cofactor.

The catalysed reaction is pyridoxamine 5'-phosphate + O2 + H2O = pyridoxal 5'-phosphate + H2O2 + NH4(+). It catalyses the reaction pyridoxine 5'-phosphate + O2 = pyridoxal 5'-phosphate + H2O2. It participates in cofactor metabolism; pyridoxal 5'-phosphate salvage; pyridoxal 5'-phosphate from pyridoxamine 5'-phosphate: step 1/1. It functions in the pathway cofactor metabolism; pyridoxal 5'-phosphate salvage; pyridoxal 5'-phosphate from pyridoxine 5'-phosphate: step 1/1. Its function is as follows. Catalyzes the oxidation of either pyridoxine 5'-phosphate (PNP) or pyridoxamine 5'-phosphate (PMP) into pyridoxal 5'-phosphate (PLP). The polypeptide is Pyridoxine/pyridoxamine 5'-phosphate oxidase (Verminephrobacter eiseniae (strain EF01-2)).